We begin with the raw amino-acid sequence, 406 residues long: Vacuole membrane protein 1 (406 aa).

The segment covering 1–20 (MAENGKNCDQRRIAMSKDQH) has biased composition (basic and acidic residues). Residues 1–37 (MAENGKNCDQRRIAMSKDQHNGSLTDPSSVHEKKRRD) form a disordered region. A2 carries the post-translational modification N-acetylalanine. Residues 2 to 77 (AENGKNCDQR…WTSKLWHRQS (76 aa)) are Cytoplasmic-facing. Residues 78-98 (IVVSFLLLLAALVATYYVEGA) traverse the membrane as a helical segment. Topologically, residues 99-109 (HQQYVQRIEKQ) are extracellular. The chain crosses the membrane as a helical span at residues 110-130 (FLLYAYWIGLGILSSVGLGTG). The Cytoplasmic segment spans residues 131 to 250 (LHTFLLYLGP…ASRAKLAVQK (120 aa)). Residues 173 to 316 (GAEGAISLWS…FVIVTFSKHI (144 aa)) are VTT domain. The helical transmembrane segment at 251 to 271 (LVQKVGFFGILACASIPNPLF) threads the bilayer. Topologically, residues 272-273 (DL) are extracellular. Residues 274-294 (AGITCGHFLVPFWTFFGATLI) traverse the membrane as a helical segment. Residues 295–305 (GKAIIKMHIQK) are Cytoplasmic-facing. A helical membrane pass occupies residues 306–326 (IFVIVTFSKHIVEQMVTFIGA). Over 327 to 363 (VPGIGPSLQKPFQEYLEAQRQKLHHRSEAGTPQGENW) the chain is Extracellular. A helical membrane pass occupies residues 364–384 (LSWMFEKLVVAMVCYFVLSII). The Cytoplasmic portion of the chain corresponds to 385 to 406 (NSMAQNYAKRIQQRLNSEEKTK).

The protein belongs to the VMP1 family. In terms of assembly, interacts with BECN1. Interacts with TJP1. Interacts with TP53INP2. Interacts with TMEM41B. Interacts with ATP2A2, PLN and SLN; competes with PLN and SLN to prevent them from forming an inhibitory complex with ATP2A2. Interacts with ATG2A.

Its subcellular location is the endoplasmic reticulum-Golgi intermediate compartment membrane. The protein resides in the cell membrane. It localises to the vacuole membrane. The protein localises to the endoplasmic reticulum membrane. The catalysed reaction is a 1,2-diacyl-sn-glycero-3-phospho-L-serine(in) = a 1,2-diacyl-sn-glycero-3-phospho-L-serine(out). It catalyses the reaction cholesterol(in) = cholesterol(out). The enzyme catalyses a 1,2-diacyl-sn-glycero-3-phosphocholine(in) = a 1,2-diacyl-sn-glycero-3-phosphocholine(out). It carries out the reaction a 1,2-diacyl-sn-glycero-3-phosphoethanolamine(in) = a 1,2-diacyl-sn-glycero-3-phosphoethanolamine(out). Its function is as follows. Phospholipid scramblase involved in lipid homeostasis and membrane dynamics processes. Has phospholipid scramblase activity toward cholesterol and phosphatidylserine, as well as phosphatidylethanolamine and phosphatidylcholine. Required for autophagosome formation: participates in early stages of autophagosome biogenesis at the endoplasmic reticulum (ER) membrane by reequilibrating the leaflets of the ER as lipids are extracted by ATG2 (ATG2A or ATG2B) to mediate autophagosome assembly. Regulates ATP2A2 activity to control ER-isolation membrane contacts for autophagosome formation. In addition to autophagy, involved in other processes in which phospholipid scramblase activity is required. Modulates ER contacts with lipid droplets, mitochondria and endosomes. Plays an essential role in formation of cell junctions. Upon stress such as bacterial and viral infection, promotes formation of cytoplasmic vacuoles followed by cell death. Involved in the cytoplasmic vacuolization of acinar cells during the early stage of acute pancreatitis. The protein is Vacuole membrane protein 1 of Mus musculus (Mouse).